The primary structure comprises 416 residues: Putative cell agglutination protein SPAC1348.08c (416 aa).

The first 27 residues, 1–27 (MNFFLYFRTIFLIQLYFFNYSTFGCSA), serve as a signal peptide directing secretion. N-linked (GlcNAc...) asparagine glycosylation occurs at Asn19. Tandem repeats lie at residues 90–124 (GTVT…EPTA) and 125–160 (GTVT…SPKN). The interval 90 to 160 (GTVTETTISG…GTVEIVSPKN (71 aa)) is 2 X 36 AA approximate tandem repeats. In terms of domain architecture, PA14 spans 224 to 390 (FNEPAYFGSS…GPLATTSYSY (167 aa)). Asn344 is a glycosylation site (N-linked (GlcNAc...) asparagine).

It is found in the cell surface. Functionally, may be involved in agglutination during conjugation or other aspects of colony formation. In Schizosaccharomyces pombe (strain 972 / ATCC 24843) (Fission yeast), this protein is Putative cell agglutination protein SPAC1348.08c.